Reading from the N-terminus, the 291-residue chain is MEMO1 family protein PYRAB05390 (291 aa).

This sequence belongs to the MEMO1 family.

In Pyrococcus abyssi (strain GE5 / Orsay), this protein is MEMO1 family protein PYRAB05390.